Consider the following 880-residue polypeptide: Leucine--tRNA ligase (880 aa).

The 'HIGH' region motif lies at proline 46–histidine 56. The tract at residues serine 483–proline 502 is disordered. A 'KMSKS' region motif is present at residues lysine 638 to serine 642. Lysine 641 contacts ATP.

It belongs to the class-I aminoacyl-tRNA synthetase family.

It localises to the cytoplasm. It carries out the reaction tRNA(Leu) + L-leucine + ATP = L-leucyl-tRNA(Leu) + AMP + diphosphate. The polypeptide is Leucine--tRNA ligase (Xanthomonas oryzae pv. oryzae (strain PXO99A)).